Consider the following 64-residue polypeptide: DNA-directed RNA polymerase subunit omega (64 aa).

This sequence belongs to the RNA polymerase subunit omega family. As to quaternary structure, the RNAP catalytic core consists of 2 alpha, 1 beta, 1 beta' and 1 omega subunit. When a sigma factor is associated with the core the holoenzyme is formed, which can initiate transcription.

It carries out the reaction RNA(n) + a ribonucleoside 5'-triphosphate = RNA(n+1) + diphosphate. In terms of biological role, promotes RNA polymerase assembly. Latches the N- and C-terminal regions of the beta' subunit thereby facilitating its interaction with the beta and alpha subunits. The chain is DNA-directed RNA polymerase subunit omega from Oceanobacillus iheyensis (strain DSM 14371 / CIP 107618 / JCM 11309 / KCTC 3954 / HTE831).